The sequence spans 111 residues: Pyrimidine/purine nucleoside phosphorylase 1 (111 aa).

Belongs to the nucleoside phosphorylase PpnP family.

It carries out the reaction a purine D-ribonucleoside + phosphate = a purine nucleobase + alpha-D-ribose 1-phosphate. The catalysed reaction is adenosine + phosphate = alpha-D-ribose 1-phosphate + adenine. It catalyses the reaction cytidine + phosphate = cytosine + alpha-D-ribose 1-phosphate. The enzyme catalyses guanosine + phosphate = alpha-D-ribose 1-phosphate + guanine. It carries out the reaction inosine + phosphate = alpha-D-ribose 1-phosphate + hypoxanthine. The catalysed reaction is thymidine + phosphate = 2-deoxy-alpha-D-ribose 1-phosphate + thymine. It catalyses the reaction uridine + phosphate = alpha-D-ribose 1-phosphate + uracil. The enzyme catalyses xanthosine + phosphate = alpha-D-ribose 1-phosphate + xanthine. In terms of biological role, catalyzes the phosphorolysis of diverse nucleosides, yielding D-ribose 1-phosphate and the respective free bases. Can use uridine, adenosine, guanosine, cytidine, thymidine, inosine and xanthosine as substrates. Also catalyzes the reverse reactions. The chain is Pyrimidine/purine nucleoside phosphorylase 1 from Psychrobacter arcticus (strain DSM 17307 / VKM B-2377 / 273-4).